The chain runs to 131 residues: Amicyanin (131 aa).

The first 26 residues, 1 to 26 (MISATKIRSCLAACVLAAFGATGALA), serve as a signal peptide directing secretion. The Plastocyanin-like domain maps to 27–131 (DKATIPSESP…PFMRGKVVVE (105 aa)). Cu cation is bound by residues histidine 79, cysteine 118, histidine 121, and methionine 124.

Cu cation serves as cofactor.

Its subcellular location is the periplasm. Its pathway is one-carbon metabolism; methylamine degradation. Its function is as follows. Primary acceptor of electrons from methylamine dehydrogenase. Passes those electrons on either a soluble cytochrome c or to pseudoazurin. In Paracoccus denitrificans, this protein is Amicyanin (mauC).